The chain runs to 198 residues: Probable chemoreceptor glutamine deamidase CheD (198 aa).

It belongs to the CheD family.

It carries out the reaction L-glutaminyl-[protein] + H2O = L-glutamyl-[protein] + NH4(+). Probably deamidates glutamine residues to glutamate on methyl-accepting chemotaxis receptors (MCPs), playing an important role in chemotaxis. This is Probable chemoreceptor glutamine deamidase CheD from Xanthomonas euvesicatoria pv. vesicatoria (strain 85-10) (Xanthomonas campestris pv. vesicatoria).